The sequence spans 188 residues: MIEAAVSMSALGLGLGLLLGVAARRFHVESPPILDAIEGILPGTNCGACGYPGCRGLAEAMSEGAAPVTACAPGGRDVALALAAIVETDGGGGAVPGMAEAEPTVAFIFEDHCTGCMRCFKRCPTDAIIGANRQIHTVVTDACIGCNACIEACPTEAIVARVKPKTLKSWYWDKPRTAFEARDTEVAA.

Positions 1 to 23 (MIEAAVSMSALGLGLGLLLGVAA) are hydrophobic. Positions 29–88 (ESPPILDAIEGILPGTNCGACGYPGCRGLAEAMSEGAAPVTACAPGGRDVALALAAIVET) constitute a 4Fe-4S domain. Residues Cys-46, Cys-49, Cys-54, Cys-71, Cys-113, Cys-116, Cys-119, Cys-123, Cys-143, Cys-146, Cys-149, and Cys-153 each coordinate [4Fe-4S] cluster. 2 4Fe-4S ferredoxin-type domains span residues 104-133 (TVAF…GANR) and 134-163 (QIHT…ARVK).

This sequence belongs to the 4Fe4S bacterial-type ferredoxin family. RnfB subfamily. As to quaternary structure, the complex is composed of six subunits: RnfA, RnfB, RnfC, RnfD, RnfE and RnfG. [4Fe-4S] cluster is required as a cofactor.

It is found in the cellular chromatophore membrane. Functionally, part of a membrane-bound complex that couples electron transfer with translocation of ions across the membrane. In Cereibacter sphaeroides (strain ATCC 17029 / ATH 2.4.9) (Rhodobacter sphaeroides), this protein is Ion-translocating oxidoreductase complex subunit B.